The following is a 350-amino-acid chain: Spermidine/putrescine import ATP-binding protein PotA (350 aa).

The ABC transporter domain maps to 6–236; the sequence is LELRNVTKDY…PENLWVAKFI (231 aa). An ATP-binding site is contributed by 38-45; that stretch reads GPSGCGKT.

This sequence belongs to the ABC transporter superfamily. Spermidine/putrescine importer (TC 3.A.1.11.1) family. As to quaternary structure, the complex is composed of two ATP-binding proteins (PotA), two transmembrane proteins (PotB and PotC) and a solute-binding protein (PotD).

Its subcellular location is the cell membrane. It carries out the reaction ATP + H2O + polyamine-[polyamine-binding protein]Side 1 = ADP + phosphate + polyamineSide 2 + [polyamine-binding protein]Side 1.. Its function is as follows. Part of the ABC transporter complex PotABCD involved in spermidine/putrescine import. Responsible for energy coupling to the transport system. This is Spermidine/putrescine import ATP-binding protein PotA from Mesoplasma florum (strain ATCC 33453 / NBRC 100688 / NCTC 11704 / L1) (Acholeplasma florum).